Here is a 1020-residue protein sequence, read N- to C-terminus: Probable leucine-rich repeat receptor-like serine/threonine-protein kinase At3g14840 (1020 aa).

A signal peptide spans M1 to S26. The Extracellular segment spans residues A27–T614. N50 and N81 each carry an N-linked (GlcNAc...) asparagine glycan. LRR repeat units lie at residues I86–L110, P111–S134, L136–L157, T158–L181, P182–K204, T206–G231, L253–N276, M277–N301, R302–G324, and S326–Q349. Residues N124, N138, and N156 are each glycosylated (N-linked (GlcNAc...) asparagine). N193 is a glycosylation site (N-linked (GlcNAc...) asparagine). Residues N276 and N289 are each glycosylated (N-linked (GlcNAc...) asparagine). N-linked (GlcNAc...) asparagine glycosylation is found at N359, N386, N389, N417, N461, N469, and N498. One copy of the LRR 11 repeat lies at Q479–V501. The helical transmembrane segment at V615–W635 threads the bilayer. Over W636–T1020 the chain is Cytoplasmic. A Protein kinase domain is found at F672–V949. ATP-binding positions include I678–V686 and K700. Y745 carries the post-translational modification Phosphotyrosine. D798 (proton acceptor) is an active-site residue. Phosphoserine is present on S831. A phosphothreonine mark is found at T832 and T837. Y845 carries the post-translational modification Phosphotyrosine.

It belongs to the protein kinase superfamily. Ser/Thr protein kinase family.

It localises to the cell membrane. It carries out the reaction L-seryl-[protein] + ATP = O-phospho-L-seryl-[protein] + ADP + H(+). The catalysed reaction is L-threonyl-[protein] + ATP = O-phospho-L-threonyl-[protein] + ADP + H(+). The sequence is that of Probable leucine-rich repeat receptor-like serine/threonine-protein kinase At3g14840 (LRR-RLK) from Arabidopsis thaliana (Mouse-ear cress).